The primary structure comprises 190 residues: Glutathione peroxidase 2 (190 aa).

The active site involves Sec-40. Residue Sec-40 is a non-standard amino acid, selenocysteine.

Belongs to the glutathione peroxidase family. As to quaternary structure, homotetramer. As to expression, mucosal epithelium of the gastrointestinal tract.

It localises to the cytoplasm. It is found in the cytosol. The catalysed reaction is 2 glutathione + H2O2 = glutathione disulfide + 2 H2O. The enzyme catalyses a hydroperoxy polyunsaturated fatty acid + 2 glutathione = a hydroxy polyunsaturated fatty acid + glutathione disulfide + H2O. It carries out the reaction tert-butyl hydroperoxide + 2 glutathione = tert-butanol + glutathione disulfide + H2O. It catalyses the reaction cumene hydroperoxide + 2 glutathione = 2-phenylpropan-2-ol + glutathione disulfide + H2O. The catalysed reaction is (13S)-hydroperoxy-(9Z,11E)-octadecadienoate + 2 glutathione = (13S)-hydroxy-(9Z,11E)-octadecadienoate + glutathione disulfide + H2O. The enzyme catalyses (5S)-hydroperoxy-(6E,8Z,11Z,14Z)-eicosatetraenoate + 2 glutathione = (5S)-hydroxy-(6E,8Z,11Z,14Z)-eicosatetraenoate + glutathione disulfide + H2O. It carries out the reaction (12R)-hydroperoxy-(5Z,8Z,10E,14Z)-eicosatetraenoate + 2 glutathione = (12R)-hydroxy-(5Z,8Z,10E,14Z)-eicosatetraenoate + glutathione disulfide + H2O. It catalyses the reaction (15S)-hydroperoxy-(5Z,8Z,11Z,13E)-eicosatetraenoate + 2 glutathione = (15S)-hydroxy-(5Z,8Z,11Z,13E)-eicosatetraenoate + glutathione disulfide + H2O. Its function is as follows. Catalyzes the reduction of hydroperoxides in a glutathione-dependent manner thus regulating cellular redox homeostasis. Can reduce small soluble hydroperoxide such as H2O2. Can reduce cumene hydroperoxide and tert-butyl hydroperoxide, as well as several fatty acid-derived hydroperoxides. Cannot reduce phosphatidycholine hydroperoxide. The sequence is that of Glutathione peroxidase 2 (Gpx2) from Rattus norvegicus (Rat).